The sequence spans 60 residues: Large ribosomal subunit protein uL30 (60 aa).

This sequence belongs to the universal ribosomal protein uL30 family. In terms of assembly, part of the 50S ribosomal subunit.

This is Large ribosomal subunit protein uL30 from Salinispora arenicola (strain CNS-205).